A 190-amino-acid chain; its full sequence is Movement protein (190 aa).

The protein belongs to the tombusvirus/aureusvirus movement protein p22 family.

It localises to the host membrane. In terms of biological role, transports viral genome to neighboring plant cells directly through plasmosdesmata, without any budding. The movement protein allows efficient cell to cell propagation, by bypassing the host cell wall barrier. The chain is Movement protein from Cucumber necrosis virus (CNV).